A 343-amino-acid chain; its full sequence is L-threonine 3-dehydrogenase (343 aa).

Cysteine 40 is a Zn(2+) binding site. Residues threonine 42 and histidine 45 each act as charge relay system in the active site. Zn(2+)-binding residues include histidine 65, glutamate 66, cysteine 95, cysteine 98, cysteine 101, and cysteine 109. NAD(+)-binding positions include isoleucine 177, aspartate 197, arginine 202, 264–266 (LGI), and 288–289 (IY).

The protein belongs to the zinc-containing alcohol dehydrogenase family. As to quaternary structure, homotetramer. Zn(2+) is required as a cofactor.

It localises to the cytoplasm. The enzyme catalyses L-threonine + NAD(+) = (2S)-2-amino-3-oxobutanoate + NADH + H(+). It functions in the pathway amino-acid degradation; L-threonine degradation via oxydo-reductase pathway; glycine from L-threonine: step 1/2. In terms of biological role, catalyzes the NAD(+)-dependent oxidation of L-threonine to 2-amino-3-ketobutyrate. The polypeptide is L-threonine 3-dehydrogenase (Vibrio parahaemolyticus serotype O3:K6 (strain RIMD 2210633)).